Consider the following 122-residue polypeptide: MASTVAGLSMSAESLRLPLLIGVSSGMLSVSDAEVLPSFLFKSGFSVLQSAALDTDDDLARGLSLLDLLPLVLLSPFFEEDVDEEEAGDVEGLDGFVFVFRLLLPLYNQSTGTSNSVLVIIT.

An N-terminal signal peptide occupies residues 1 to 33 (MASTVAGLSMSAESLRLPLLIGVSSGMLSVSDA).

This is an uncharacterized protein from Saccharomyces cerevisiae (strain ATCC 204508 / S288c) (Baker's yeast).